We begin with the raw amino-acid sequence, 327 residues long: Methionine import ATP-binding protein MetN (327 aa).

Residues 3–239 form the ABC transporter domain; the sequence is VELKNIEKIY…PKHAVTKELI (237 aa). 36-43 provides a ligand contact to ATP; the sequence is GYSGAGKS.

It belongs to the ABC transporter superfamily. Methionine importer (TC 3.A.1.24) family. In terms of assembly, the complex is composed of two ATP-binding proteins (MetN), two transmembrane proteins (MetI) and a solute-binding protein (MetQ).

It localises to the cell inner membrane. The catalysed reaction is L-methionine(out) + ATP + H2O = L-methionine(in) + ADP + phosphate + H(+). It catalyses the reaction D-methionine(out) + ATP + H2O = D-methionine(in) + ADP + phosphate + H(+). Its function is as follows. Part of the ABC transporter complex MetNIQ involved in methionine import. Responsible for energy coupling to the transport system. This Helicobacter acinonychis (strain Sheeba) protein is Methionine import ATP-binding protein MetN.